We begin with the raw amino-acid sequence, 131 residues long: Translation initiation factor 5A (131 aa).

A Hypusine modification is found at lysine 37.

This sequence belongs to the eIF-5A family.

The protein localises to the cytoplasm. Its function is as follows. Functions by promoting the formation of the first peptide bond. This chain is Translation initiation factor 5A (eIF5A), found in Methanococcus maripaludis (strain C7 / ATCC BAA-1331).